The chain runs to 55 residues: Large ribosomal subunit protein bL33 (55 aa).

Belongs to the bacterial ribosomal protein bL33 family.

The sequence is that of Large ribosomal subunit protein bL33 from Polaromonas sp. (strain JS666 / ATCC BAA-500).